The following is a 242-amino-acid chain: uncharacterized protein (242 aa).

The first 17 residues, 1-17 (MKFSPAYLLAFAPIVAA), serve as a signal peptide directing secretion. Asn-47, Asn-86, Asn-122, Asn-159, and Asn-178 each carry an N-linked (GlcNAc...) asparagine glycan. The interval 176–214 (NANESTADGQAQSGSSGSSSDSGSHSGHSSATQTSSTTA) is disordered. The segment covering 180-214 (STADGQAQSGSSGSSSDSGSHSGHSSATQTSSTTA) has biased composition (low complexity). Ala-218 carries GPI-like-anchor amidated alanine lipidation. A propeptide spans 219 to 242 (GAVALETAAWGILGAAVVGGLAVL) (removed in mature form).

The GPI-like anchor contains a phosphoceramide lipid group. The anchor position has not been determined.

It is found in the cell membrane. This is an uncharacterized protein from Aspergillus fumigatus (strain ATCC MYA-4609 / CBS 101355 / FGSC A1100 / Af293) (Neosartorya fumigata).